Here is a 139-residue protein sequence, read N- to C-terminus: Large ribosomal subunit protein uL16c (139 aa).

This sequence belongs to the universal ribosomal protein uL16 family. In terms of assembly, part of the 50S ribosomal subunit.

It is found in the plastid. It localises to the chloroplast. The protein is Large ribosomal subunit protein uL16c of Cryptomeria japonica (Japanese cedar).